A 100-amino-acid polypeptide reads, in one-letter code: Protein SAMBA (100 aa).

The interval 1-40 (MNGASPAHSLVSTTAVAGGGGSSGAAAGLDDFHFPPDIPS) is disordered.

In terms of assembly, interacts with CDC27B and CYCA2-3. Expressed in embryos, germinating seeds, hypocotyls and pollen grains.

Functionally, plays an important role in organ size control. Acts as negative regulator of the anaphase-promoting complex/cyclosome (APC/C). Regulates cell proliferation during early development by targeting CYCA2-3 for APC/C-mediated degradation. Required for mitosis I during pollen microspore development. The polypeptide is Protein SAMBA (Arabidopsis thaliana (Mouse-ear cress)).